The sequence spans 301 residues: MTVQRILIVSGTHGNEINPVWAVKQFSRKENSLNNGIEYEYIIGNPAAYEKGCRYIDVDLNRSFKESGNFDQHKNSFYETNRANFLVDEFGIDGSKPCQIAIDLHTTTANMGTSIVMYGRRSKDFCLAALLQNKFGLPIYLHEKDKAQTGFLVEAWPCGLVIEIGAVAQNFYDQNIVNRFSLIIGSLREEIDKLKNKLVELPKELVVHVHQGSIDYPRDEKGDIDGIIHPARINQDWKMIKKGDPLFLDSQGIIHKYERDKLIWPVFIGEVAYKEKKIAMSYTKKEVICSKKQWVQEFESF.

Zn(2+) contacts are provided by H13 and E16. Substrate contacts are provided by residues R54 and 61-62 (NR). H105 serves as a coordination point for Zn(2+). 2 residues coordinate substrate: E163 and Y273.

The protein belongs to the AspA/AstE family. Aspartoacylase subfamily. Requires Zn(2+) as cofactor.

It carries out the reaction an N-acyl-L-aspartate + H2O = a carboxylate + L-aspartate. The protein is Probable aspartoacylase of Prochlorococcus marinus (strain MIT 9301).